We begin with the raw amino-acid sequence, 408 residues long: Serine/threonine transporter SstT (408 aa).

Helical transmembrane passes span 14-34, 43-63, 83-103, 143-163, 181-201, 219-239, 247-269, 290-310, and 332-352; these read GNLILQICIGIVLGILIGIFS, IFGALFTGALKAIAPILVFIL, IIFLYIFGTFLASLSAVSISF, ALSSGNYLSILAWAIGGGFAL, VLKIVKFIVKLAPFGIFGLVA, LIILVLTMFFVAFVINALIVF, YPLIFICLKHSAVFAFFTRSSAA, ISIPLGATINMAGAAVTIAIL, and VLAAFAACGASGVAGGSLLLI.

Belongs to the dicarboxylate/amino acid:cation symporter (DAACS) (TC 2.A.23) family.

The protein localises to the cell inner membrane. The catalysed reaction is L-serine(in) + Na(+)(in) = L-serine(out) + Na(+)(out). It carries out the reaction L-threonine(in) + Na(+)(in) = L-threonine(out) + Na(+)(out). In terms of biological role, involved in the import of serine and threonine into the cell, with the concomitant import of sodium (symport system). The chain is Serine/threonine transporter SstT from Campylobacter lari (strain RM2100 / D67 / ATCC BAA-1060).